The following is a 1909-amino-acid chain: MEGKRQLEKRDFGKRLSLDSSLVEYMDSNKYIEHLLTQLEEQHRSLWREKLAVARLQREVAQRTSEGAMHEKLIHELEEERHLRLQSEKRLQEVTLESERNRIQMRSLQQQFSRMEETVRNLLQSQGSPEQKKEETVNIMVYQEKLSEEERKHKEALEDLHMVVDEDSRSESSSTDEGKEKTKLLLERLKALEAENSALALENENQREQYERCLDEVANQVVQALLTQKDLREECVKLKTRVFDLEQQNRTLSILFQQRVRPTSDLLLQKLHSRLLDLSSGDLLSEVERNRSLTQSRTDAEVHEHQLNTKSALKCPGLGAVIPGHLCPRNSYSSSSELSLSSTCSEYSSGSSYTWHDGKNLRKRQSSQNWDKRLSIDSSLPSGFASPTNELPPTRIKESHILEGLRKLQKRKVLLEPPSVITKWGYKDCMNSNEGIYSPGIKSSSLKEYPPCKTADLGSPCKEPHKTFVYDLDSHVDADDDPSTLALLQAVPNQSCRPHGSKLTHSVSDSLFGWETNRKHFLEGTSSVYPKERPEKLTSCASSCPLEMKLCPSVQTPQVQRERGPQGQGHGRMALNLQLSDTDDNETFDELHIESSDEKSPSDVSLAADTDKSVENLDVLVGFGKSLCGSPEEEEKQVPIPSETRPKTFSFIKQQRVVKRTSSEECVTVIFDAEDGEPIEFSSHQTGVVTVTRNEISINSTPAGPKAEHTELLPQGIACLQPRAAARDYTFFKRSEEDTEKNIPKDNVDNVPRVSTESFSSRTVTQNPQQQKLVKPTHNISCQSNSRSSAPMGIYQKQNLTKIPPRGKSSPQKSKLMEPEATTLLPSSGLVTLEKSPALAPGKLSRFMKTESSGPLFELRSDPHIPKHSAQLPHSSRMPSRRDWVQCPKSQTPGSRSRPAIESSDSGEPPTRDEHCGSGPEAGVKSPSPPPPPGRSVSLLARPSYDYSPAPSSTKSETRVPSETARTPFKSPLLKGISAPVISSNPATTEVQRKKPSVAFKKPIFTHPMPSPEAVIQTRCPAHAPSSSFTVMALGPPKVSPKRGVPKTSPRQTLGTPQRDIGLQTPRISPSTHEPLEMTSSKSVSPGRKGQLNDSASTPPKPSFLGVNESPSSQVSSSSSSSSPAKSHNSPHGCQSAHEKGLKTRLPVGLKVLMKSPQLLRKSSTVPGKHEKDSLNEASKSSVAVNKSKPEDSKNPASMEITAGERNVTLPDSQAQGSLADGLPLETALQEPLESSIPGSDGRDGVDNRSMRRSLSSSKPHLKPALGMNGAKARSHSFSTHSGDKPSTPPIEGSGKVRTQIITNTAERGNSLTRQNSSTESSPNKAPSAPMLESLPSVGRPSGHPSSGKGSLGSSGSFSSQHGSPSKLPLRIPPKSEGLLIPPGKEDQQAFTQGECPSANVAVLGEPGSDRRSCPPTPTDCPEALQSPGRTQHPSTFETSSTSKLETSGRHPDASATATDAVSSEAPLSPTIEEKVMLCIQENVEKGQVQTKPTSVEAKQKPGPSFASWFGFRKSRLPALSSRKMDISKTKVEKKDAKVLGFGNRQLKSERKKEKKKPELQCETENELIKDTKSADNPDGGLQSKNNRRTPQDIYNQLKIEPRNRHSPVACSTKDTFMTELLNRVDKKAAPQTESGSSNASCRNVLKGSSQGSCLIGSSISTQGNHKKNMKIKADMEVPKDSLVKEANENLQEDEDDAVADSVFQSHIIESNCQMRTLDSGIGTFPLPDSGNRSTGRYLCQPDSPEDAEPLLPLQSALSAVSSMRAQTLEREVPSSTDGQRPADSAIVHSTSDPIMTARGMRPLQSRLPKPASSGKVSSQKQNEAEPRPQTCSSFGYAEDPMASQPLPDWGSEVAATGTQDKAPRMCTYSASGGSNSDSDLDYGDNGFGAGRGQLVKALKSAAPEIETT.

The stretch at 71–253 forms a coiled coil; it reads EKLIHELEEE…DLEQQNRTLS (183 aa). Disordered regions lie at residues 351-370, 736-819, 855-997, 1026-1469, 1486-1509, 1541-1592, 1725-1750, and 1763-1885; these read SSYT…SQNW, EEDT…LMEP, PLFE…KKPS, SSSF…APLS, KGQV…FASW, GFGN…RTPQ, FPLP…DAEP, and SMRA…DYGD. The segment covering 736–748 has biased composition (basic and acidic residues); it reads EEDTEKNIPKDNV. Composition is skewed to polar residues over residues 753-789, 950-965, 981-990, and 1066-1084; these read RVST…SRSS, APSS…SETA, VISSNPATTE, and PRIS…SKSV. 2 stretches are compositionally biased toward low complexity: residues 1110 to 1131 and 1178 to 1187; these read SPSS…HNSP and ASKSSVAVNK. The span at 1241–1250 shows a compositional bias: basic and acidic residues; sequence DGRDGVDNRS. The segment covering 1300-1325 has biased composition (polar residues); the sequence is QIITNTAERGNSLTRQNSSTESSPNK. Positions 1339–1366 are enriched in low complexity; sequence GRPSGHPSSGKGSLGSSGSFSSQHGSPS. Polar residues predominate over residues 1428–1446; the sequence is PGRTQHPSTFETSSTSKLE. Low complexity predominate over residues 1454–1466; that stretch reads ASATATDAVSSEA. 2 stretches are compositionally biased toward basic and acidic residues: residues 1547 to 1560 and 1567 to 1576; these read LKSE…KPEL and ELIKDTKSAD. Residues 1869 to 1878 are compositionally biased toward polar residues; that stretch reads YSASGGSNSD.

As to quaternary structure, interacts with the SH3-containing region of the adapter protein NCK. Expressed in fetal and adult brain, leukocytes and fetal fibroblasts.

The polypeptide is Nck-associated protein 5 (NCKAP5) (Homo sapiens (Human)).